Here is a 197-residue protein sequence, read N- to C-terminus: MTQTENKVVIFLGPPGAGKGTQAERLAQEQSLTKISTGDILRDHVARGTELGQQVKPILDAGHLVPDEILIALIRDKLAGMRPVRVIFDGFPRTGAQAEALDALLEDLGAPVTAVPLLEVPDQVLIDRIVERGNQAQARGEAVRSDDNEETARRRQQVYREQTQPLIDYYAGRGQLYTVNGVGSLDEVYDRILKGMQ.

16–21 (GAGKGT) serves as a coordination point for ATP. Residues 36–65 (STGDILRDHVARGTELGQQVKPILDAGHLV) are NMP. AMP contacts are provided by residues T37, R42, 63-65 (HLV), 90-93 (GFPR), and Q97. Positions 131-147 (ERGNQAQARGEAVRSDD) are LID. Residue R132 participates in ATP binding. AMP is bound by residues R144 and R155. ATP is bound at residue G183.

Belongs to the adenylate kinase family. Monomer.

It localises to the cytoplasm. It carries out the reaction AMP + ATP = 2 ADP. The protein operates within purine metabolism; AMP biosynthesis via salvage pathway; AMP from ADP: step 1/1. In terms of biological role, catalyzes the reversible transfer of the terminal phosphate group between ATP and AMP. Plays an important role in cellular energy homeostasis and in adenine nucleotide metabolism. This Deinococcus deserti (strain DSM 17065 / CIP 109153 / LMG 22923 / VCD115) protein is Adenylate kinase.